A 393-amino-acid polypeptide reads, in one-letter code: Branched-chain amino acid aminotransferase 1, mitochondrial (393 aa).

The transit peptide at 1–34 directs the protein to the mitochondrion; the sequence is MIHRGLWLHNLVQSYRVGSSSSSSTLFKLVYRYN. Residue arginine 138 coordinates pyridoxal 5'-phosphate. The active-site Proton acceptor is lysine 240. The residue at position 240 (lysine 240) is an N6-(pyridoxal phosphate)lysine. Glutamate 276 contributes to the pyridoxal 5'-phosphate binding site.

This sequence belongs to the class-IV pyridoxal-phosphate-dependent aminotransferase family. Requires pyridoxal 5'-phosphate as cofactor. As to expression, expressed specifically in lupulin glands.

The protein resides in the mitochondrion. It carries out the reaction L-isoleucine + 2-oxoglutarate = (S)-3-methyl-2-oxopentanoate + L-glutamate. The catalysed reaction is L-leucine + 2-oxoglutarate = 4-methyl-2-oxopentanoate + L-glutamate. The enzyme catalyses L-valine + 2-oxoglutarate = 3-methyl-2-oxobutanoate + L-glutamate. It participates in amino-acid biosynthesis; L-isoleucine biosynthesis; L-isoleucine from 2-oxobutanoate: step 4/4. It functions in the pathway amino-acid biosynthesis; L-leucine biosynthesis; L-leucine from 3-methyl-2-oxobutanoate: step 4/4. Its pathway is amino-acid biosynthesis; L-valine biosynthesis; L-valine from pyruvate: step 4/4. In terms of biological role, converts 2-oxo acids to branched-chain amino acids (BCAA). Shows no kinetic preferences corresponding to anabolic or catabolic functions, but likely involved in BCAA catabolism. The protein is Branched-chain amino acid aminotransferase 1, mitochondrial of Humulus lupulus (European hop).